The primary structure comprises 427 residues: 3-phosphoshikimate 1-carboxyvinyltransferase (427 aa).

The 3-phosphoshikimate site is built by Lys-20, Ser-21, and Arg-25. Residue Lys-20 coordinates phosphoenolpyruvate. Gly-92 and Arg-120 together coordinate phosphoenolpyruvate. 3-phosphoshikimate is bound by residues Ser-166, Gln-168, Asp-312, and Lys-339. Residue Gln-168 coordinates phosphoenolpyruvate. The active-site Proton acceptor is the Asp-312. Phosphoenolpyruvate is bound by residues Arg-343 and Arg-385.

Belongs to the EPSP synthase family. As to quaternary structure, monomer.

It is found in the cytoplasm. It catalyses the reaction 3-phosphoshikimate + phosphoenolpyruvate = 5-O-(1-carboxyvinyl)-3-phosphoshikimate + phosphate. Its pathway is metabolic intermediate biosynthesis; chorismate biosynthesis; chorismate from D-erythrose 4-phosphate and phosphoenolpyruvate: step 6/7. Catalyzes the transfer of the enolpyruvyl moiety of phosphoenolpyruvate (PEP) to the 5-hydroxyl of shikimate-3-phosphate (S3P) to produce enolpyruvyl shikimate-3-phosphate and inorganic phosphate. In Streptococcus pneumoniae (strain 70585), this protein is 3-phosphoshikimate 1-carboxyvinyltransferase.